The sequence spans 160 residues: SsrA-binding protein (160 aa).

This sequence belongs to the SmpB family.

The protein resides in the cytoplasm. Functionally, required for rescue of stalled ribosomes mediated by trans-translation. Binds to transfer-messenger RNA (tmRNA), required for stable association of tmRNA with ribosomes. tmRNA and SmpB together mimic tRNA shape, replacing the anticodon stem-loop with SmpB. tmRNA is encoded by the ssrA gene; the 2 termini fold to resemble tRNA(Ala) and it encodes a 'tag peptide', a short internal open reading frame. During trans-translation Ala-aminoacylated tmRNA acts like a tRNA, entering the A-site of stalled ribosomes, displacing the stalled mRNA. The ribosome then switches to translate the ORF on the tmRNA; the nascent peptide is terminated with the 'tag peptide' encoded by the tmRNA and targeted for degradation. The ribosome is freed to recommence translation, which seems to be the essential function of trans-translation. The polypeptide is SsrA-binding protein (Mycobacterium bovis (strain ATCC BAA-935 / AF2122/97)).